Reading from the N-terminus, the 235-residue chain is Carboxy-S-adenosyl-L-methionine synthase (235 aa).

Residues Y35, 60-62, 84-85, 110-111, N125, and R192 contribute to the S-adenosyl-L-methionine site; these read GCS, DN, and DI.

This sequence belongs to the class I-like SAM-binding methyltransferase superfamily. Cx-SAM synthase family. Homodimer.

It carries out the reaction prephenate + S-adenosyl-L-methionine = carboxy-S-adenosyl-L-methionine + 3-phenylpyruvate + H2O. Functionally, catalyzes the conversion of S-adenosyl-L-methionine (SAM) to carboxy-S-adenosyl-L-methionine (Cx-SAM). The polypeptide is Carboxy-S-adenosyl-L-methionine synthase (Sulfurimonas denitrificans (strain ATCC 33889 / DSM 1251) (Thiomicrospira denitrificans (strain ATCC 33889 / DSM 1251))).